The following is a 354-amino-acid chain: Aspartate carbamoyltransferase catalytic subunit (354 aa).

Carbamoyl phosphate is bound by residues Arg67 and Thr68. Lys95 serves as a coordination point for L-aspartate. Carbamoyl phosphate is bound by residues Arg117, His150, and Gln153. The L-aspartate site is built by Arg190 and Arg261. The carbamoyl phosphate site is built by Gly302 and Pro303.

The protein belongs to the aspartate/ornithine carbamoyltransferase superfamily. ATCase family. As to quaternary structure, heterododecamer (2C3:3R2) of six catalytic PyrB chains organized as two trimers (C3), and six regulatory PyrI chains organized as three dimers (R2).

The catalysed reaction is carbamoyl phosphate + L-aspartate = N-carbamoyl-L-aspartate + phosphate + H(+). It participates in pyrimidine metabolism; UMP biosynthesis via de novo pathway; (S)-dihydroorotate from bicarbonate: step 2/3. Catalyzes the condensation of carbamoyl phosphate and aspartate to form carbamoyl aspartate and inorganic phosphate, the committed step in the de novo pyrimidine nucleotide biosynthesis pathway. The polypeptide is Aspartate carbamoyltransferase catalytic subunit (Synechococcus sp. (strain RCC307)).